The following is a 459-amino-acid chain: Periodic tryptophan protein 1 homolog (459 aa).

Positions 44–84 are disordered; sequence GDTQQELDEESDDDAEEGENAEEDQNDMDVDDHADANSENR. The segment covering 48–73 has biased composition (acidic residues); that stretch reads QELDEESDDDAEEGENAEEDQNDMDV. Over residues 74–84 the composition is skewed to basic and acidic residues; it reads DDHADANSENR. WD repeat units follow at residues 168-214, 232-272, 275-315, 321-361, and 365-405; these read LLPS…AIEP, GHKD…PHTT, AFGK…GVNS, KVDG…QLLW, and AHNE…AKHV. The residue at position 385 (S385) is a Phosphoserine.

Belongs to the WD repeat PWP1 family. In terms of assembly, interacts with Mybbp1A. In terms of processing, phosphorylated in response to nutrient-activated TORC1 signaling. Detected in the germline of adult testis and ovary (at protein level). Detected in ovary somatic cells, in zfh1-positive cyst cells in the testis and absent in differentiated cyst cells (at protein level).

The protein localises to the nucleus. The protein resides in the nucleolus. It is found in the chromosome. It localises to the nucleoplasm. Chromatin-associated factor that regulates transcription. Regulates Pol I-mediated rRNA biogenesis and, probably, Pol III-mediated transcription. Regulates the localization to the nucleolus of Cdk7, a regulator of the Pol I-elongation factor TFIIH. Acts as a regulator of cell proliferation and tissue growth as part of the TORC1 and Myc signaling pathway in response to nutrients. Required in males for both germline stem cell (GSC) maintenance and early stages of germ cell differentiation of germ cell cysts. Not required for female germline stem cell (GSC) maintenance, but necessary to regulate germ cell differentiation and egg chamber development. In female somatic cells, required for follicle stem cell survival and maintenance. This chain is Periodic tryptophan protein 1 homolog, found in Drosophila melanogaster (Fruit fly).